A 178-amino-acid chain; its full sequence is uncharacterized protein (178 aa).

The disordered stretch occupies residues 64-103 (GVSDNTNKTTAKDNVSDKSSENEVAQPKQVTPPVDATGNT). Residues 73–84 (TAKDNVSDKSSE) show a composition bias toward basic and acidic residues.

This is an uncharacterized protein from Acidianus sp. F28 (AFV-2).